We begin with the raw amino-acid sequence, 271 residues long: Proteasome inhibitor PI31 subunit (271 aa).

Ala2 carries the post-translational modification N-acetylalanine. Residues 2-150 (AGLEVLFASA…PIHEQWEKVR (149 aa)) form an important for homodimerization and interaction with FBXO7 region. Residues Ser153 and Ser189 each carry the phosphoserine modification. Residue Arg205 is modified to Omega-N-methylarginine. The residue at position 219 (Arg219) is an Asymmetric dimethylarginine. A disordered region spans residues 221 to 271 (LIDPSSGLPNRLPPGAVPPGARFDPFGPIGTSPSGPNPDHLPPPGYDDMYL). Omega-N-methylarginine is present on Arg231. Ser252 bears the Phosphoserine mark. The span at 255-265 (GPNPDHLPPPG) shows a compositional bias: pro residues.

The protein belongs to the proteasome inhibitor PI31 family. In terms of assembly, monomer and homodimer. Interacts with FBXO7.

It localises to the cytoplasm. The protein localises to the endoplasmic reticulum. In terms of biological role, plays an important role in control of proteasome function. Inhibits the hydrolysis of protein and peptide substrates by the 20S proteasome. Also inhibits the activation of the proteasome by the proteasome regulatory proteins PA700 and PA28. The sequence is that of Proteasome inhibitor PI31 subunit (Psmf1) from Rattus norvegicus (Rat).